The sequence spans 465 residues: ATP-dependent rRNA helicase rrp3 (465 aa).

Residues 1–46 are disordered; it reads MSALKKRKITEKQPETNSDSEAESVSSRGSAKDETQTSGEEPAPAK. Residues 15-29 show a composition bias toward polar residues; the sequence is ETNSDSEAESVSSRG. The Q motif signature appears at 46 to 74; that stretch reads KSFKELGIIDQLCEACENMGYKAPTPIQS. The Helicase ATP-binding domain occupies 77-248; sequence IPLALEGRDV…RASLSNPVRV (172 aa). Residue 90–97 participates in ATP binding; sequence AETGSGKT. A DEAD box motif is present at residues 196–199; it reads DEAD. One can recognise a Helicase C-terminal domain in the interval 275–419; the sequence is YLVYLLNEFA…EYQVEKDEVM (145 aa). Residues 436–465 form a disordered region; the sequence is MKSFDEKKGARGKKFGKGKRSRDDMDQEEG. The segment covering 445 to 455 has biased composition (basic residues); sequence ARGKKFGKGKR.

The protein belongs to the DEAD box helicase family. DDX47/RRP3 subfamily. In terms of assembly, interacts with the SSU processome.

It is found in the nucleus. The enzyme catalyses ATP + H2O = ADP + phosphate + H(+). Its function is as follows. ATP-dependent rRNA helicase required for pre-ribosomal RNA processing. Involved in the maturation of the 35S-pre-rRNA and to its cleavage to mature 18S rRNA. The sequence is that of ATP-dependent rRNA helicase rrp3 from Emericella nidulans (strain FGSC A4 / ATCC 38163 / CBS 112.46 / NRRL 194 / M139) (Aspergillus nidulans).